A 306-amino-acid chain; its full sequence is Ribosomal RNA small subunit methyltransferase H (306 aa).

S-adenosyl-L-methionine is bound by residues 33–35 (GGY), aspartate 51, phenylalanine 78, aspartate 96, and glutamine 103.

Belongs to the methyltransferase superfamily. RsmH family.

Its subcellular location is the cytoplasm. It catalyses the reaction cytidine(1402) in 16S rRNA + S-adenosyl-L-methionine = N(4)-methylcytidine(1402) in 16S rRNA + S-adenosyl-L-homocysteine + H(+). In terms of biological role, specifically methylates the N4 position of cytidine in position 1402 (C1402) of 16S rRNA. In Rickettsia typhi (strain ATCC VR-144 / Wilmington), this protein is Ribosomal RNA small subunit methyltransferase H.